The chain runs to 37 residues: Large ribosomal subunit protein bL36 (37 aa).

It belongs to the bacterial ribosomal protein bL36 family.

The sequence is that of Large ribosomal subunit protein bL36 from Natranaerobius thermophilus (strain ATCC BAA-1301 / DSM 18059 / JW/NM-WN-LF).